The following is a 338-amino-acid chain: RNA 3'-terminal phosphate cyclase (338 aa).

ATP-binding positions include Gln103 and 283-287; that span reads YLADQ. His308 acts as the Tele-AMP-histidine intermediate in catalysis.

This sequence belongs to the RNA 3'-terminal cyclase family. Type 1 subfamily.

The protein resides in the cytoplasm. The enzyme catalyses a 3'-end 3'-phospho-ribonucleotide-RNA + ATP = a 3'-end 2',3'-cyclophospho-ribonucleotide-RNA + AMP + diphosphate. Catalyzes the conversion of 3'-phosphate to a 2',3'-cyclic phosphodiester at the end of RNA. The mechanism of action of the enzyme occurs in 3 steps: (A) adenylation of the enzyme by ATP; (B) transfer of adenylate to an RNA-N3'P to produce RNA-N3'PP5'A; (C) and attack of the adjacent 2'-hydroxyl on the 3'-phosphorus in the diester linkage to produce the cyclic end product. The biological role of this enzyme is unknown but it is likely to function in some aspects of cellular RNA processing. In Escherichia coli O6:K15:H31 (strain 536 / UPEC), this protein is RNA 3'-terminal phosphate cyclase.